The primary structure comprises 259 residues: Ribosomal RNA small subunit methyltransferase J (259 aa).

S-adenosyl-L-methionine contacts are provided by residues 109-110 (RD), 125-126 (ER), 161-162 (SS), and Asp179.

Belongs to the methyltransferase superfamily. RsmJ family.

Its subcellular location is the cytoplasm. The catalysed reaction is guanosine(1516) in 16S rRNA + S-adenosyl-L-methionine = N(2)-methylguanosine(1516) in 16S rRNA + S-adenosyl-L-homocysteine + H(+). Its function is as follows. Specifically methylates the guanosine in position 1516 of 16S rRNA. In Shewanella putrefaciens (strain CN-32 / ATCC BAA-453), this protein is Ribosomal RNA small subunit methyltransferase J.